The following is a 200-amino-acid chain: Probable GTP-binding protein EngB (200 aa).

In terms of domain architecture, EngB-type G spans 22-199 (NVAEVAFLGR…QDKITGYLFG (178 aa)). GTP-binding positions include 30–37 (GRSNVGKS), 57–61 (GKTQL), 85–88 (DLPG), 155–158 (TKID), and 177–180 (FLSN). S37 and T59 together coordinate Mg(2+).

It belongs to the TRAFAC class TrmE-Era-EngA-EngB-Septin-like GTPase superfamily. EngB GTPase family. Mg(2+) is required as a cofactor.

Functionally, necessary for normal cell division and for the maintenance of normal septation. The sequence is that of Probable GTP-binding protein EngB from Aliarcobacter butzleri (strain RM4018) (Arcobacter butzleri).